Here is a 963-residue protein sequence, read N- to C-terminus: Phosphoenolpyruvate carboxylase (963 aa).

At Ser-11 the chain carries Phosphoserine. Active-site residues include His-172 and Lys-600.

It belongs to the PEPCase type 1 family. In terms of assembly, homotetramer. The cofactor is Mg(2+).

It is found in the cytoplasm. It carries out the reaction oxaloacetate + phosphate = phosphoenolpyruvate + hydrogencarbonate. By light-reversible phosphorylation. Its function is as follows. Through the carboxylation of phosphoenolpyruvate (PEP) it forms oxaloacetate, a four-carbon dicarboxylic acid source for the tricarboxylic acid cycle. The protein is Phosphoenolpyruvate carboxylase (PPC) of Picea abies (Norway spruce).